Consider the following 421-residue polypeptide: Ankyrin repeat and SOCS box protein 6 (421 aa).

ANK repeat units lie at residues 67–97 (EGVSNALLKMAELGLTRAADVLLRHGANLNF), 102–131 (TYYTALHIAVLRNQPDMVELLVHHGADVNR), 136–166 (HESSPLDLASEEPERLPCLQRLLDLGADVNA), 170–205 (HGKTALLHALASSDGVQIHNTENIRLLLEGGADVKA), 226–255 (GGDKEEAQMINRFCFQVTRLLLAHGADPSE), and 260–289 (ESLTHICLKSFKLHFPLLRFLLESGAAYNC). One can recognise an SOCS box domain in the interval 360–415 (ALHFSLRQLESYPPPLKHLCRVAIRLYLQPWPVDVKVKALPLPDRLKWYLLSEHSG).

The protein belongs to the ankyrin SOCS box (ASB) family. Binds APS. Identified in a complex with ELOB and ELOC. Interacts with CUL5 and RNF7. Interacts with SQSTM1. In terms of processing, ubiquitinated by RNF41; leading to proteasomal degradation.

The protein resides in the cytoplasm. It participates in protein modification; protein ubiquitination. Functionally, probable substrate-recognition component of a SCF-like ECS (Elongin-Cullin-SOCS-box protein) E3 ubiquitin-protein ligase complex which mediates the ubiquitination and subsequent proteasomal degradation of target proteins. May play a role in the regulation of cell proliferation and autophagy by promoting the ubiquitination and degradation of SQSTM1. The sequence is that of Ankyrin repeat and SOCS box protein 6 (ASB6) from Homo sapiens (Human).